Consider the following 132-residue polypeptide: NADPH-dependent 7-cyano-7-deazaguanine reductase (132 aa).

Cys-43 serves as the catalytic Thioimide intermediate. Asp-50 functions as the Proton donor in the catalytic mechanism. Substrate-binding positions include 65–67 (VEL) and 84–85 (HE).

This sequence belongs to the GTP cyclohydrolase I family. QueF type 1 subfamily.

The protein resides in the cytoplasm. The enzyme catalyses 7-aminomethyl-7-carbaguanine + 2 NADP(+) = 7-cyano-7-deazaguanine + 2 NADPH + 3 H(+). It participates in tRNA modification; tRNA-queuosine biosynthesis. Its function is as follows. Catalyzes the NADPH-dependent reduction of 7-cyano-7-deazaguanine (preQ0) to 7-aminomethyl-7-deazaguanine (preQ1). This Thermosynechococcus vestitus (strain NIES-2133 / IAM M-273 / BP-1) protein is NADPH-dependent 7-cyano-7-deazaguanine reductase.